The primary structure comprises 380 residues: Chorismate synthase (380 aa).

R49 is a binding site for NADP(+). FMN-binding positions include G288, 303–307, and R330; that span reads KPPSS.

It belongs to the chorismate synthase family. The cofactor is FMNH2.

It catalyses the reaction 5-O-(1-carboxyvinyl)-3-phosphoshikimate = chorismate + phosphate. The protein operates within metabolic intermediate biosynthesis; chorismate biosynthesis; chorismate from D-erythrose 4-phosphate and phosphoenolpyruvate: step 7/7. Catalyzes the anti-1,4-elimination of the C-3 phosphate and the C-6 proR hydrogen from 5-enolpyruvylshikimate-3-phosphate (EPSP) to yield chorismate, which is the branch point compound that serves as the starting substrate for the three terminal pathways of aromatic amino acid biosynthesis. This reaction introduces a second double bond into the aromatic ring system. The polypeptide is Chorismate synthase (Aeropyrum pernix (strain ATCC 700893 / DSM 11879 / JCM 9820 / NBRC 100138 / K1)).